A 622-amino-acid chain; its full sequence is Basal cell adhesion molecule (622 aa).

Residues 1–25 form the signal peptide; the sequence is MEPPDARAGLLWLTFLLSGYSGAQA. Ig-like V-type domains lie at 26–135 and 140–250; these read ELHV…SSVR and PEDT…HTFR. Residues 26-541 lie on the Extracellular side of the membrane; sequence ELHVSVPPRV…GSVAPQTAQA (516 aa). 3 disulfides stabilise this stretch: Cys-47-Cys-118, Cys-165-Cys-230, and Cys-284-Cys-330. Ig-like C2-type domains lie at 267–342, 356–435, and 442–532; these read PSTT…EEVQ, PLEL…QSFQ, and PELK…FHFG. 4 N-linked (GlcNAc...) asparagine glycosylation sites follow: Asn-314, Asn-323, Asn-370, and Asn-377. 2 disulfide bridges follow: Cys-378–Cys-418 and Cys-467–Cys-516. The chain crosses the membrane as a helical span at residues 542 to 562; the sequence is GVAVMAVAVSVGLLLLVVAAF. The Cytoplasmic portion of the chain corresponds to 563-622; sequence YCMRRKGRPGCCRRAEKGAPPAREPELSHSGSERPEHTGLLMGGPSGGGRGGSGGFGDEC. A disordered region spans residues 574-622; sequence CRRAEKGAPPAREPELSHSGSERPEHTGLLMGGPSGGGRGGSGGFGDEC. Over residues 575 to 599 the composition is skewed to basic and acidic residues; the sequence is RRAEKGAPPAREPELSHSGSERPEH. Residues Ser-590, Ser-592, Ser-594, and Ser-615 each carry the phosphoserine modification. Residues 603–622 show a composition bias toward gly residues; it reads LMGGPSGGGRGGSGGFGDEC.

Homodimer. Interacts with ITGA4:ITGB1. Interacts with spectrins SPTA1 and SPTB1. Post-translationally, epinephrine-stimulated phosphorylation of Ser-615 by PKA enhances adhesion to laminin. Ser-615 can also be phosphorylated by AKT1.

Its subcellular location is the cell membrane. Transmembrane glycoprotein that functions as both a receptor and an adhesion molecule playing a crucial role in cell adhesion, motility, migration and invasion. Extracellular domain enables binding to extracellular matrix proteins, such as laminin, integrin and other ligands while its intracellular domain interacts with cytoskeletal proteins like hemoglobin, facilitating cell signal transduction. Serves as a receptor for laminin alpha-5/LAMA5 to promote cell adhesion. Mechanistically, JAK2 induces BCAM phosphorylation and activates its adhesion to laminin by stimulating a Rap1/AKT signaling pathway in the absence of EPOR. The sequence is that of Basal cell adhesion molecule (Bcam) from Mus musculus (Mouse).